A 243-amino-acid polypeptide reads, in one-letter code: MEIFMEVPIFVVISGSDLYGIPNPSDVDIRGAHILDRELFIKNCLYKSKEEEVINKMFGKCDFVSFELGKFLRELLKPNANFIEIALSDKVLYSSKYHEDVKGIAYNCICKKLYHHWKGFAKPLQKLCEKESYNNPKTLLYILRAYYQGILCLESGEFKSDFSSFRCLDCYDEDIVSYLFECKVNKKPVDESYKKKIKSYFYELGVLLDESYKNSNLIDEPSETAKIKAIELYKKLYFEDVRE.

This is an uncharacterized protein from Methanocaldococcus jannaschii (strain ATCC 43067 / DSM 2661 / JAL-1 / JCM 10045 / NBRC 100440) (Methanococcus jannaschii).